Consider the following 291-residue polypeptide: Ribosomal RNA small subunit methyltransferase A (291 aa).

6 residues coordinate S-adenosyl-L-methionine: His37, Leu39, Gly64, Glu85, Asp110, and Asn131.

Belongs to the class I-like SAM-binding methyltransferase superfamily. rRNA adenine N(6)-methyltransferase family. RsmA subfamily.

The protein resides in the cytoplasm. It catalyses the reaction adenosine(1518)/adenosine(1519) in 16S rRNA + 4 S-adenosyl-L-methionine = N(6)-dimethyladenosine(1518)/N(6)-dimethyladenosine(1519) in 16S rRNA + 4 S-adenosyl-L-homocysteine + 4 H(+). Functionally, specifically dimethylates two adjacent adenosines (A1518 and A1519) in the loop of a conserved hairpin near the 3'-end of 16S rRNA in the 30S particle. May play a critical role in biogenesis of 30S subunits. This chain is Ribosomal RNA small subunit methyltransferase A, found in Dehalococcoides mccartyi (strain ATCC BAA-2100 / JCM 16839 / KCTC 5957 / BAV1).